Here is a 258-residue protein sequence, read N- to C-terminus: Tryptophan synthase alpha chain (258 aa).

Active-site proton acceptor residues include glutamate 47 and aspartate 58.

The protein belongs to the TrpA family. Tetramer of two alpha and two beta chains.

It catalyses the reaction (1S,2R)-1-C-(indol-3-yl)glycerol 3-phosphate + L-serine = D-glyceraldehyde 3-phosphate + L-tryptophan + H2O. It functions in the pathway amino-acid biosynthesis; L-tryptophan biosynthesis; L-tryptophan from chorismate: step 5/5. Its function is as follows. The alpha subunit is responsible for the aldol cleavage of indoleglycerol phosphate to indole and glyceraldehyde 3-phosphate. The sequence is that of Tryptophan synthase alpha chain from Bacillus anthracis (strain CDC 684 / NRRL 3495).